The following is an 89-amino-acid chain: Small ribosomal subunit protein uS15 (89 aa).

This sequence belongs to the universal ribosomal protein uS15 family. In terms of assembly, part of the 30S ribosomal subunit. Forms a bridge to the 50S subunit in the 70S ribosome, contacting the 23S rRNA.

In terms of biological role, one of the primary rRNA binding proteins, it binds directly to 16S rRNA where it helps nucleate assembly of the platform of the 30S subunit by binding and bridging several RNA helices of the 16S rRNA. Functionally, forms an intersubunit bridge (bridge B4) with the 23S rRNA of the 50S subunit in the ribosome. This Trichormus variabilis (strain ATCC 29413 / PCC 7937) (Anabaena variabilis) protein is Small ribosomal subunit protein uS15.